A 230-amino-acid chain; its full sequence is Nucleoside diphosphate kinase 2, chloroplastic (230 aa).

Residues 1-64 (MEAMAVFSGS…SYPKTFRTRS (64 aa)) constitute a chloroplast transit peptide. Lys-90, Phe-138, Arg-166, Thr-172, Arg-183, and Asn-193 together coordinate ATP. The Pros-phosphohistidine intermediate role is filled by His-196.

It belongs to the NDK family. Requires Mg(2+) as cofactor.

It is found in the plastid. The protein localises to the chloroplast. It carries out the reaction a 2'-deoxyribonucleoside 5'-diphosphate + ATP = a 2'-deoxyribonucleoside 5'-triphosphate + ADP. The catalysed reaction is a ribonucleoside 5'-diphosphate + ATP = a ribonucleoside 5'-triphosphate + ADP. Major role in the synthesis of nucleoside triphosphates other than ATP. The ATP gamma phosphate is transferred to the NDP beta phosphate via a ping-pong mechanism, using a phosphorylated active-site intermediate. This Pisum sativum (Garden pea) protein is Nucleoside diphosphate kinase 2, chloroplastic (NDPK2).